The sequence spans 1082 residues: Neisserial autotransporter lipoprotein NalP (1082 aa).

A signal peptide spans M1–A27. C28 is lipidated: N-palmitoyl cysteine. The S-diacylglycerol cysteine moiety is linked to residue C28. The 373-residue stretch at N110–M482 folds into the Peptidase S8 domain. Active-site charge relay system residues include D138, H210, and S426. Residues D808–F1082 form the Autotransporter domain.

Belongs to the peptidase S8 family. Post-translationally, probably auto-processes to yield a 68-70 kDa form and a C-terminal 30 kDa translocator domain; upon overexpression in situ and in E.coli full-length protein is seen as well as (probably) auto-processed forms of 68-70 kDa and 30 kDa in size, suggesting this may have protease activity.

Its subcellular location is the cell outer membrane. It localises to the cell surface. It is found in the secreted. The protein localises to the host cytoplasm. The protein resides in the host perinuclear region. With respect to regulation, cleavage of host complement factor C3 is inhibited by PMSF. Its function is as follows. Major human immunogenic protein, detected in patients recovering from meningitidis. Autotransporter with a secreted protease domain involved in processing other autotransporter proteins including App, IgA, LbpB and NHBA. Probably autoprocesses to release the about 70 kDa passenger domain. Both cell surface protein (Neisserial autotransporter lipoprotein NalP) and the passenger domain cleave human (host) complement factor C3, generating a shorter alpha chain and a longer beta chain than normal. Uptake of a passenger domain fragment (residues 101-784) by human cells increases cell metabolic activity; the serine protease activity is required for this increase. Cleaves human (host) complement factor C3, generating a shorter alpha chain and a longer beta chain than normal. Does not act on mouse or rabbit C3. Cleavage causes C3b degradation by human CFI and CFH, and thus decreases deposition of C3b on the bacteria surface and probably facilitates complement escape. In terms of biological role, plays a role in extracellular-DNA (eDNA) mediated biofilm formation. In some strains (including cc32 strain MC58) eDNA stimulates biofilm formation. When NalP is not expressed (and no longer processes NHBA or IgA) biofilm formation increases. This is Neisserial autotransporter lipoprotein NalP from Neisseria meningitidis serogroup B (strain ATCC BAA-335 / MC58).